The primary structure comprises 97 residues: Citrate lyase acyl carrier protein (97 aa).

Ser-14 bears the O-(phosphoribosyl dephospho-coenzyme A)serine mark.

The protein belongs to the CitD family. Oligomer with a subunit composition of (alpha,beta,gamma)6.

Its subcellular location is the cytoplasm. In terms of biological role, covalent carrier of the coenzyme of citrate lyase. This chain is Citrate lyase acyl carrier protein, found in Yersinia enterocolitica serotype O:8 / biotype 1B (strain NCTC 13174 / 8081).